Consider the following 365-residue polypeptide: Sulfate/thiosulfate import ATP-binding protein CysA (365 aa).

The 235-residue stretch at 3-237 (IEIANIKKSF…PATRFVLEFM (235 aa)) folds into the ABC transporter domain. Position 35–42 (35–42 (GPSGSGKT)) interacts with ATP.

This sequence belongs to the ABC transporter superfamily. Sulfate/tungstate importer (TC 3.A.1.6) family. The complex is composed of two ATP-binding proteins (CysA), two transmembrane proteins (CysT and CysW) and a solute-binding protein (CysP).

The protein resides in the cell inner membrane. The enzyme catalyses sulfate(out) + ATP + H2O = sulfate(in) + ADP + phosphate + H(+). It carries out the reaction thiosulfate(out) + ATP + H2O = thiosulfate(in) + ADP + phosphate + H(+). Functionally, part of the ABC transporter complex CysAWTP involved in sulfate/thiosulfate import. Responsible for energy coupling to the transport system. This chain is Sulfate/thiosulfate import ATP-binding protein CysA, found in Escherichia coli O157:H7.